The sequence spans 505 residues: ATP synthase subunit alpha (505 aa).

169-176 provides a ligand contact to ATP; sequence GDRKTGKT.

It belongs to the ATPase alpha/beta chains family. F-type ATPases have 2 components, CF(1) - the catalytic core - and CF(0) - the membrane proton channel. CF(1) has five subunits: alpha(3), beta(3), gamma(1), delta(1), epsilon(1). CF(0) has three main subunits: a(1), b(2) and c(9-12). The alpha and beta chains form an alternating ring which encloses part of the gamma chain. CF(1) is attached to CF(0) by a central stalk formed by the gamma and epsilon chains, while a peripheral stalk is formed by the delta and b chains.

The protein localises to the cell membrane. It catalyses the reaction ATP + H2O + 4 H(+)(in) = ADP + phosphate + 5 H(+)(out). Its function is as follows. Produces ATP from ADP in the presence of a proton gradient across the membrane. The alpha chain is a regulatory subunit. The protein is ATP synthase subunit alpha of Pediococcus pentosaceus (strain ATCC 25745 / CCUG 21536 / LMG 10740 / 183-1w).